The following is a 169-amino-acid chain: Probable inosine/xanthosine triphosphatase (169 aa).

Aspartate 58 contacts Mg(2+).

Belongs to the YjjX NTPase family. In terms of assembly, homodimer. It depends on Mg(2+) as a cofactor. Mn(2+) is required as a cofactor.

It carries out the reaction XTP + H2O = XDP + phosphate + H(+). The enzyme catalyses ITP + H2O = IDP + phosphate + H(+). Its function is as follows. Phosphatase that hydrolyzes non-canonical purine nucleotides such as XTP and ITP to their respective diphosphate derivatives. Probably excludes non-canonical purines from DNA/RNA precursor pool, thus preventing their incorporation into DNA/RNA and avoiding chromosomal lesions. The sequence is that of Probable inosine/xanthosine triphosphatase from Archaeoglobus fulgidus (strain ATCC 49558 / DSM 4304 / JCM 9628 / NBRC 100126 / VC-16).